The primary structure comprises 434 residues: 3-phosphoshikimate 1-carboxyvinyltransferase (434 aa).

3-phosphoshikimate is bound by residues K22, S23, and R27. K22 provides a ligand contact to phosphoenolpyruvate. G93 and R121 together coordinate phosphoenolpyruvate. Positions 168, 169, 170, 199, 320, and 347 each coordinate 3-phosphoshikimate. Q170 contacts phosphoenolpyruvate. D320 serves as the catalytic Proton acceptor. Residues R351, R394, and K419 each coordinate phosphoenolpyruvate.

This sequence belongs to the EPSP synthase family. Monomer.

The protein localises to the cytoplasm. It catalyses the reaction 3-phosphoshikimate + phosphoenolpyruvate = 5-O-(1-carboxyvinyl)-3-phosphoshikimate + phosphate. It participates in metabolic intermediate biosynthesis; chorismate biosynthesis; chorismate from D-erythrose 4-phosphate and phosphoenolpyruvate: step 6/7. In terms of biological role, catalyzes the transfer of the enolpyruvyl moiety of phosphoenolpyruvate (PEP) to the 5-hydroxyl of shikimate-3-phosphate (S3P) to produce enolpyruvyl shikimate-3-phosphate and inorganic phosphate. This Burkholderia multivorans (strain ATCC 17616 / 249) protein is 3-phosphoshikimate 1-carboxyvinyltransferase.